A 252-amino-acid chain; its full sequence is MTQTPEALTTEQFKQAIIDKGQYYHIYHPFHVMMYEGKATQQQIQAWVANRYYYQINIPLKDAAIMANCPNQRVRQEWIQRMIDQDGEYPDGGGREAWLRLAEAVGLSREQVISEELVLPGVRFAVDAYVNFARRASWREAASSSLTELFAPQIHQSRLESWPQHYPWIDDKGYEYFRSRLSQARRDVEHGLTITLDSFTTHEQQQRMLEILQFKLDILWSILDALTLAYVHNEAPYHSVTQERVWHKGLFK.

It belongs to the PqqC family.

The enzyme catalyses 6-(2-amino-2-carboxyethyl)-7,8-dioxo-1,2,3,4,7,8-hexahydroquinoline-2,4-dicarboxylate + 3 O2 = pyrroloquinoline quinone + 2 H2O2 + 2 H2O + H(+). It participates in cofactor biosynthesis; pyrroloquinoline quinone biosynthesis. Functionally, ring cyclization and eight-electron oxidation of 3a-(2-amino-2-carboxyethyl)-4,5-dioxo-4,5,6,7,8,9-hexahydroquinoline-7,9-dicarboxylic-acid to PQQ. This Acinetobacter baumannii (strain ACICU) protein is Pyrroloquinoline-quinone synthase.